The sequence spans 490 residues: Cytochrome P450 2C1 (490 aa).

Cysteine 435 lines the heme pocket.

It belongs to the cytochrome P450 family. The cofactor is heme.

It localises to the endoplasmic reticulum membrane. The protein resides in the microsome membrane. It carries out the reaction an organic molecule + reduced [NADPH--hemoprotein reductase] + O2 = an alcohol + oxidized [NADPH--hemoprotein reductase] + H2O + H(+). Functionally, cytochromes P450 are a group of heme-thiolate monooxygenases. In liver microsomes, this enzyme is involved in an NADPH-dependent electron transport pathway. It oxidizes a variety of structurally unrelated compounds, including steroids, fatty acids, and xenobiotics. In Oryctolagus cuniculus (Rabbit), this protein is Cytochrome P450 2C1 (CYP2C1).